The sequence spans 468 residues: ATP synthase subunit beta (468 aa).

155-162 (GGAGVGKT) is a binding site for ATP.

It belongs to the ATPase alpha/beta chains family. F-type ATPases have 2 components, CF(1) - the catalytic core - and CF(0) - the membrane proton channel. CF(1) has five subunits: alpha(3), beta(3), gamma(1), delta(1), epsilon(1). CF(0) has three main subunits: a(1), b(2) and c(9-12). The alpha and beta chains form an alternating ring which encloses part of the gamma chain. CF(1) is attached to CF(0) by a central stalk formed by the gamma and epsilon chains, while a peripheral stalk is formed by the delta and b chains.

Its subcellular location is the cell membrane. The enzyme catalyses ATP + H2O + 4 H(+)(in) = ADP + phosphate + 5 H(+)(out). Its function is as follows. Produces ATP from ADP in the presence of a proton gradient across the membrane. The catalytic sites are hosted primarily by the beta subunits. In Streptococcus sanguinis (strain SK36), this protein is ATP synthase subunit beta.